We begin with the raw amino-acid sequence, 156 residues long: Putative NrdI-like protein (156 aa).

The chain is Putative NrdI-like protein from Streptococcus pneumoniae (strain ATCC BAA-255 / R6).